Reading from the N-terminus, the 450-residue chain is Phosphoglucosamine mutase (450 aa).

The active-site Phosphoserine intermediate is the Ser-101. Mg(2+) contacts are provided by Ser-101, Asp-242, Asp-244, and Asp-246. Ser-101 carries the phosphoserine modification.

The protein belongs to the phosphohexose mutase family. The cofactor is Mg(2+). Post-translationally, activated by phosphorylation.

The enzyme catalyses alpha-D-glucosamine 1-phosphate = D-glucosamine 6-phosphate. Its function is as follows. Catalyzes the conversion of glucosamine-6-phosphate to glucosamine-1-phosphate. This is Phosphoglucosamine mutase from Rhodopseudomonas palustris (strain HaA2).